The sequence spans 200 residues: dITP/XTP pyrophosphatase (200 aa).

7 to 12 (TSNKHK) contacts substrate. 2 residues coordinate Mg(2+): E38 and D73. Residue D73 is the Proton acceptor of the active site. Residues S74, 154–157 (FGYD), K177, and 182–183 (HR) contribute to the substrate site.

Belongs to the HAM1 NTPase family. As to quaternary structure, homodimer. It depends on Mg(2+) as a cofactor.

It carries out the reaction XTP + H2O = XMP + diphosphate + H(+). The catalysed reaction is dITP + H2O = dIMP + diphosphate + H(+). It catalyses the reaction ITP + H2O = IMP + diphosphate + H(+). Functionally, pyrophosphatase that catalyzes the hydrolysis of nucleoside triphosphates to their monophosphate derivatives, with a high preference for the non-canonical purine nucleotides XTP (xanthosine triphosphate), dITP (deoxyinosine triphosphate) and ITP. Seems to function as a house-cleaning enzyme that removes non-canonical purine nucleotides from the nucleotide pool, thus preventing their incorporation into DNA/RNA and avoiding chromosomal lesions. The chain is dITP/XTP pyrophosphatase from Campylobacter jejuni subsp. doylei (strain ATCC BAA-1458 / RM4099 / 269.97).